Reading from the N-terminus, the 173-residue chain is ATP synthase subunit delta (173 aa).

The protein belongs to the ATPase delta chain family. F-type ATPases have 2 components, F(1) - the catalytic core - and F(0) - the membrane proton channel. F(1) has five subunits: alpha(3), beta(3), gamma(1), delta(1), epsilon(1). F(0) has three main subunits: a(1), b(2) and c(10-14). The alpha and beta chains form an alternating ring which encloses part of the gamma chain. F(1) is attached to F(0) by a central stalk formed by the gamma and epsilon chains, while a peripheral stalk is formed by the delta and b chains.

Its subcellular location is the cell inner membrane. In terms of biological role, f(1)F(0) ATP synthase produces ATP from ADP in the presence of a proton or sodium gradient. F-type ATPases consist of two structural domains, F(1) containing the extramembraneous catalytic core and F(0) containing the membrane proton channel, linked together by a central stalk and a peripheral stalk. During catalysis, ATP synthesis in the catalytic domain of F(1) is coupled via a rotary mechanism of the central stalk subunits to proton translocation. This protein is part of the stalk that links CF(0) to CF(1). It either transmits conformational changes from CF(0) to CF(1) or is implicated in proton conduction. The sequence is that of ATP synthase subunit delta from Campylobacter jejuni subsp. doylei (strain ATCC BAA-1458 / RM4099 / 269.97).